The sequence spans 229 residues: MDSKGSAQKGSRLLLLLVVSNLLLCQGVVSTPVCPNGPGNCQVSLRDLFDRAVMVSHYIHNLSSEMFNEFDKRYAQGKGFITMALNSCHTSSLPTPEDKEQAQQTHHEVLMSLILGLLRSWNDPLYHLVTEVRGMKGVPDAILSRAIEIEEENKRLLEGMEMIFGQVIPGAKETEPYPVWSGLPSLQTKDEDARHSAFYNLLHCLRRDSSKIDTYLKLLNCRIIYNNNC.

Positions 1–30 are cleaved as a signal peptide; the sequence is MDSKGSAQKGSRLLLLLVVSNLLLCQGVVS. An intrachain disulfide couples Cys34 to Cys41. Position 56 is a phosphoserine (Ser56). An N-linked (GlcNAc...) asparagine; partial glycan is attached at Asn61. Residues Ser64 and Ser120 each carry the phosphoserine modification. 2 cysteine pairs are disulfide-bonded: Cys88-Cys204 and Cys221-Cys229.

This sequence belongs to the somatotropin/prolactin family. As to quaternary structure, interacts with PRLR.

It localises to the secreted. Functionally, prolactin acts primarily on the mammary gland by promoting lactation, mammogenesis, mitogenesis and osmoregulation. This Ovis aries (Sheep) protein is Prolactin (PRL).